Consider the following 409-residue polypeptide: Accessory Sec system protein translocase subunit SecY2 (409 aa).

A run of 10 helical transmembrane segments spans residues 16-36 (ILIT…PIPG), 61-81 (LSQV…MILL), 104-124 (VVML…FQYH), 132-152 (LLLA…IGNL), 161-181 (MTIL…PLIF), 190-210 (LAII…ITFE), 242-262 (GMAF…IILL), 286-306 (GVVI…FVNI), 341-361 (LFGT…LLFA), and 374-394 (TGIF…FQVI).

It belongs to the SecY/SEC61-alpha family. SecY2 subfamily. Component of the accessory SecA2/SecY2 protein translocase complex required to export cell wall proteins. May form heterotrimers with SecE and SecG subunits.

Its subcellular location is the cell membrane. Part of the accessory SecA2/SecY2 system specifically required for export of possible cell wall proteins. The central subunit of a protein translocation channel. The polypeptide is Accessory Sec system protein translocase subunit SecY2 (Streptococcus agalactiae serotype III (strain NEM316)).